A 150-amino-acid polypeptide reads, in one-letter code: MLAQFDVNLVVLLVLLICGLLSQNAAVTIAADVLIVIKITPLNQFFPYIQAHGLNLGILILTIGVLTPIASGKLSGESILKSFISFKSLVAIAIGLLVAWLGGRGVKLMSSQPDVVAGLLIGTVAGVALLRGVPVGPLIAAGLLSLFIGK.

The next 4 membrane-spanning stretches (helical) occupy residues 1–21 (MLAQ…CGLL), 45–65 (FFPY…TIGV), 83–103 (FISF…WLGG), and 115–135 (VVAG…GVPV).

It belongs to the UPF0756 family.

It localises to the cell membrane. The chain is UPF0756 membrane protein ABAYE1440 from Acinetobacter baumannii (strain AYE).